The sequence spans 67 residues: ATP synthase protein 8 (67 aa).

Residues 8 to 24 (TWSITIMSMIMTLFIVF) traverse the membrane as a helical segment. K54 is subject to N6-acetyllysine; alternate. K54 is subject to N6-succinyllysine; alternate. K57 bears the N6-acetyllysine mark.

The protein belongs to the ATPase protein 8 family. F-type ATPases have 2 components, CF(1) - the catalytic core - and CF(0) - the membrane proton channel. Component of an ATP synthase complex composed of ATP5PB, ATP5MC1, ATP5F1E, ATP5PD, ATP5ME, ATP5PF, ATP5MF, MT-ATP6, MT-ATP8, ATP5F1A, ATP5F1B, ATP5F1D, ATP5F1C, ATP5PO, ATP5MG, ATP5MK and ATP5MJ. Interacts with PRICKLE3.

It is found in the mitochondrion membrane. Functionally, mitochondrial membrane ATP synthase (F(1)F(0) ATP synthase or Complex V) produces ATP from ADP in the presence of a proton gradient across the membrane which is generated by electron transport complexes of the respiratory chain. F-type ATPases consist of two structural domains, F(1) - containing the extramembraneous catalytic core and F(0) - containing the membrane proton channel, linked together by a central stalk and a peripheral stalk. During catalysis, ATP synthesis in the catalytic domain of F(1) is coupled via a rotary mechanism of the central stalk subunits to proton translocation. Part of the complex F(0) domain. Minor subunit located with subunit a in the membrane. In Felis silvestris lybica (African wildcat), this protein is ATP synthase protein 8 (MT-ATP8).